A 216-amino-acid polypeptide reads, in one-letter code: U1 small nuclear ribonucleoprotein C (216 aa).

A Matrin-type zinc finger spans residues 4–36; the sequence is FFCDYCDVYLTHDSMSVRKAHNAGRNHLRNVVE. Pro residues-rich tracts occupy residues 68–80, 87–198, and 206–216; these read AMAP…PPFG, QLPP…PAPP, and PGPPPGLSEKR. The segment at 68–216 is disordered; the sequence is AMAPPGAFPP…GPPPGLSEKR (149 aa).

Belongs to the U1 small nuclear ribonucleoprotein C family. As to quaternary structure, U1 snRNP is composed of the 7 core Sm proteins B/B', D1, D2, D3, E, F and G that assemble in a heptameric protein ring on the Sm site of the small nuclear RNA to form the core snRNP, and at least 3 U1 snRNP-specific proteins U1-70K, U1-A and U1-C. U1-C interacts with U1 snRNA and the 5' splice-site region of the pre-mRNA.

It is found in the nucleus. Its function is as follows. Component of the spliceosomal U1 snRNP, which is essential for recognition of the pre-mRNA 5' splice-site and the subsequent assembly of the spliceosome. U1-C is directly involved in initial 5' splice-site recognition for both constitutive and regulated alternative splicing. The interaction with the 5' splice-site seems to precede base-pairing between the pre-mRNA and the U1 snRNA. Stimulates commitment or early (E) complex formation by stabilizing the base pairing of the 5' end of the U1 snRNA and the 5' splice-site region. In Aspergillus fumigatus (strain ATCC MYA-4609 / CBS 101355 / FGSC A1100 / Af293) (Neosartorya fumigata), this protein is U1 small nuclear ribonucleoprotein C.